Reading from the N-terminus, the 213-residue chain is Guanylate kinase (213 aa).

The Guanylate kinase-like domain maps to 12-190; that stretch reads GLCLVVAAPS…AIDQVRTILH (179 aa). Position 19 to 26 (19 to 26) interacts with ATP; the sequence is APSGAGKS.

Belongs to the guanylate kinase family.

The protein localises to the cytoplasm. It carries out the reaction GMP + ATP = GDP + ADP. Functionally, essential for recycling GMP and indirectly, cGMP. The sequence is that of Guanylate kinase from Granulibacter bethesdensis (strain ATCC BAA-1260 / CGDNIH1).